The chain runs to 1197 residues: MAGHLVNYGKHRTRRSYARIKEVLELPNLIEIQSNSYQWFLDEGLREMFDDIMPIDDFAGNLSLEFVDYQLLEPKYTVEEARQHDANYSAPLHVTLKLTNHETGEIKSQDVFFGDFPLMTDQGTFIINGAERVIVSQLVRSPGVYFNSAIDKNSRTTYGTTVIPNRGAWLEFETDAKDIAYVRIDRTRKIPMSVLVRALGYGSDQEIIDILGDNDSLMLTLEKDIHKNTDDSRTEEALKDVYERLRPGEPKTADSSRSLLFARFFDAKRYDLASVGRYKINKKLSLKTRLLGQTLAETLADPDTGEVIAAKDTVVDRQVMDALAPYLDCEDFKAVTYQPSDEGVLPEPMTLQVIKVYSQKTPDKEINLIGNGHIDAKVKHVIPADIIASMNYFFNLQEGLGSTDDIDHLGNRRIRSVGELLQNQFRIGLSRMERVVRERMSIQDTSTVTPQQLINIRPVVASIKEFFGSSQLSQFMDQTNPLGELTHKRRLSALGPGGLTRDRAGYEVRDVHYTHYGRMCPIETPEGPNIGLINSLASYAVVNRYGFIETPYRRVSWDTHDVTDKIDYLTADEEDNYVIAQANSPLNDDGSFVDNTVLARYKDDNIETSIDKLDYMDVSPKQVVAVATACIPFLENDDSNRALMGANMQRQAVPLVNPHAPLVGTGMEYKAAHDSGIALLAQHAGTVEYVDAKVIRVRREDSSLDTYELMKFRRSNAGKNYNQRPIVAKGDHVDVDEIIADGPAMEKGELALGQNPLIAFMTWNMYNYEDAIVLSERLVKEDLYTSIHIEEYESEARDTKLGPEEITREIPNVGEDSLKDLDEFGIVRVGAEVKDGDILVGKVTPKGVTELSAEERLLHAIFGEKAREVRDTSLKVPHGGGGIIQDVKIFTREAGDELSPGVNMMVRVYITQKRKIQVGDKMAGRHGNKGTVSIVVPEEDMPYTPDGTPVDILLSPMGVPSRMNIGQVLELHLGMAARNLGIHVATPVFDGAQDKDLWDAVREANMPSDGKSILYDGRTGEPFDTRVSVGVMYYMKLAHMVDDKLHARSIGPYSLVTQQPLGGKAQFGGQRFGEMEVWALEAYGAAYTLQEILTYKSDDVVGRVKTYEAIVKGEPIPKPGVPESFRVLVKELQSLGLDMKVLDIDNQEIELRDMDDDDDDVVNVDALSKYAKEQEEKKAQQEAEKAQAASAEDPSAE.

A compositionally biased stretch (basic and acidic residues) spans 1172-1185 (KEQEEKKAQQEAEK). The interval 1172–1197 (KEQEEKKAQQEAEKAQAASAEDPSAE) is disordered. Low complexity predominate over residues 1186–1197 (AQAASAEDPSAE).

This sequence belongs to the RNA polymerase beta chain family. As to quaternary structure, the RNAP catalytic core consists of 2 alpha, 1 beta, 1 beta' and 1 omega subunit. When a sigma factor is associated with the core the holoenzyme is formed, which can initiate transcription.

The catalysed reaction is RNA(n) + a ribonucleoside 5'-triphosphate = RNA(n+1) + diphosphate. In terms of biological role, DNA-dependent RNA polymerase catalyzes the transcription of DNA into RNA using the four ribonucleoside triphosphates as substrates. The polypeptide is DNA-directed RNA polymerase subunit beta (Latilactobacillus sakei subsp. sakei (strain 23K) (Lactobacillus sakei subsp. sakei)).